The chain runs to 119 residues: Large ribosomal subunit protein bL20 (119 aa).

Belongs to the bacterial ribosomal protein bL20 family.

Binds directly to 23S ribosomal RNA and is necessary for the in vitro assembly process of the 50S ribosomal subunit. It is not involved in the protein synthesizing functions of that subunit. The sequence is that of Large ribosomal subunit protein bL20 from Jannaschia sp. (strain CCS1).